A 1250-amino-acid chain; its full sequence is Immunoglobulin superfamily DCC subclass member 4 (1250 aa).

The signal sequence occupies residues Met1–Gly24. The Extracellular segment spans residues Glu25–Thr957. 4 Ig-like C2-type domains span residues Pro29 to Val137, Ala143 to Ser229, Gln242 to Arg330, and Pro335 to Ala421. A disulfide bridge links Cys57 with Cys121. Residues Asn90, Asn102, and Asn157 are each glycosylated (N-linked (GlcNAc...) asparagine). Cys164 and Cys212 are disulfide-bonded. N-linked (GlcNAc...) asparagine glycosylation occurs at Asn252. Intrachain disulfides connect Cys265/Cys312 and Cys356/Cys405. 5 consecutive Fibronectin type-III domains span residues Ala431–Asp525, Pro527–Met623, Ala632–Pro741, Pro752–Asp845, and Pro850–Glu945. An N-linked (GlcNAc...) asparagine glycan is attached at Asn582. A helical transmembrane segment spans residues Gly958 to Leu978. At Arg979–Ala1250 the chain is on the cytoplasmic side. Phosphothreonine is present on Thr995. Disordered regions lie at residues Ser1140–Gln1175 and Pro1215–Ala1250.

Belongs to the immunoglobulin superfamily. DCC family.

It is found in the cell membrane. This is Immunoglobulin superfamily DCC subclass member 4 (IGDCC4) from Homo sapiens (Human).